The following is a 127-amino-acid chain: Nuclear transport factor 2 (127 aa).

N6-acetyllysine is present on Lys4. Positions 10–121 (IGSSFIQHYY…WVCTNDMFRL (112 aa)) constitute an NTF2 domain.

Homodimer. Interacts with RAN (GDP-bound form); the interaction is direct and regulates RAN nuclear import. Interacts with the nucleoporins NUP54, NUP58 and NUP62 (via FG repeats); recruits NUTF2 to the nuclear pore complex a step required for NUTF2-mediated GDP-bound RAN nuclear import. Interacts with CAPG; mediates its nuclear import.

It localises to the cytoplasm. Its subcellular location is the cytosol. It is found in the nucleus outer membrane. The protein localises to the nucleus. The protein resides in the nuclear pore complex. It localises to the nucleus inner membrane. Its subcellular location is the nucleoplasm. Mediates the import of GDP-bound RAN from the cytoplasm into the nucleus which is essential for the function of RAN in cargo receptor-mediated nucleocytoplasmic transport. Thereby, plays indirectly a more general role in cargo receptor-mediated nucleocytoplasmic transport. Interacts with GDP-bound RAN in the cytosol, recruits it to the nuclear pore complex via its interaction with nucleoporins and promotes its nuclear import. The polypeptide is Nuclear transport factor 2 (Bos taurus (Bovine)).